Reading from the N-terminus, the 121-residue chain is Protein TCL1B5 (121 aa).

The protein belongs to the TCL1 family.

This is Protein TCL1B5 (Tcl1b5) from Mus musculus (Mouse).